The primary structure comprises 432 residues: Myb family transcription factor EFM (432 aa).

Residues 36 to 81 adopt a coiled-coil conformation; it reads LEDLLSRLEQERLKIDAFKRELPLCMQLLNNAVEVYKQQLEAYRAN. Composition is skewed to polar residues over residues 123–139 and 187–197; these read SQSE…TDQS and SPTNEHTNGQD. The segment at 123–237 is disordered; the sequence is SQSETKPKNI…SQSNRKARRC (115 aa). Positions 201 to 231 are enriched in low complexity; the sequence is ESMINNDNNYNNNNNNNSNSNGVSSTTSQSN. Residues 230–290 enclose the HTH myb-type domain; it reads SNRKARRCWS…HLQKYRLHTR (61 aa). A DNA-binding region (H-T-H motif) is located at residues 261 to 286; sequence PKQIRELMKVDGLTNDEVKSHLQKYR. Residues 354–412 are disordered; it reads FYTTPPPPQPLHHHHFQTFNGSSGGTASTDSTHHQVTDSPTVEGKSPESGGGERKGLAA.

As to quaternary structure, interacts with JMJ30, but not with SVP, FLC or CO. Specifically expressed in vascular tissues of cotyledons, rosette leaves and cauline leaves. Not detected in the vegetative shoot apical meristem.

The protein localises to the nucleus. In terms of biological role, transcription factor acting as a flowering repressor, directly repressing FT expression in a dosage-dependent manner in the leaf vasculature. The sequence is that of Myb family transcription factor EFM from Arabidopsis thaliana (Mouse-ear cress).